The following is a 361-amino-acid chain: Prostaglandin E2 receptor EP2 subtype (361 aa).

The span at 1–10 (MGSISNNSGS) shows a compositional bias: polar residues. The disordered stretch occupies residues 1-21 (MGSISNNSGSEDCESREWLPS). Topologically, residues 1–23 (MGSISNNSGSEDCESREWLPSGE) are extracellular. The N-linked (GlcNAc...) asparagine glycan is linked to asparagine 6. A helical transmembrane segment spans residues 24–47 (SPAISSAMFSAGVLGNLIALALLA). Topologically, residues 48 to 65 (RRWRGDAGRRAGRGNSIS) are cytoplasmic. A helical membrane pass occupies residues 66–91 (LFHVLVTELVFTDLLGTCLISPVVLA). Topologically, residues 92–111 (SYARNQTLMALEPERRACTY) are extracellular. Asparagine 96 carries N-linked (GlcNAc...) asparagine glycosylation. Cysteine 109 and cysteine 187 are oxidised to a cystine. The helical transmembrane segment at 112 to 132 (FAFAMTFFSLATMLMLFAMAL) threads the bilayer. Over 133-151 (ERYLSIGRPYFYQRHVTRR) the chain is Cytoplasmic. The helical transmembrane segment at 152–176 (GGLAVLPTIYTVSLLFCSLPLLGYG) threads the bilayer. Topologically, residues 177 to 198 (QYVQYCPGTWCFIRHGRTAYLQ) are extracellular. Residues 199–223 (LYATLLLLLIVAVLACNFSVILNLI) traverse the membrane as a helical segment. Over 224–262 (RMHRRSGRSRCGPSLGSCRDGSGTRRRGERVSVAEETDH) the chain is Cytoplasmic. Residues 230–253 (GRSRCGPSLGSCRDGSGTRRRGER) are disordered. Residues 263–286 (LILLAIMTITFAICSLPFTIFAYM) traverse the membrane as a helical segment. Asparagine 287 is a glycosylation site (N-linked (GlcNAc...) asparagine). The Extracellular portion of the chain corresponds to 287 to 299 (NETSSRREKWDLQ). A helical transmembrane segment spans residues 300–323 (ALRFLSINSIIDPWVFAIFRPPVL). Topologically, residues 324–361 (RLMRSVLCCRVSLRAQDATQTSCSIQSNASRLTFVDTS) are cytoplasmic.

This sequence belongs to the G-protein coupled receptor 1 family.

The protein localises to the cell membrane. Receptor for prostaglandin E2 (PGE2). The activity of this receptor is mediated by G(s) proteins that stimulate adenylate cyclase. The subsequent raise in intracellular cAMP is responsible for the relaxing effect of this receptor on smooth muscle. This Canis lupus familiaris (Dog) protein is Prostaglandin E2 receptor EP2 subtype (PTGER2).